We begin with the raw amino-acid sequence, 116 residues long: Large ribosomal subunit protein bL20 (116 aa).

Belongs to the bacterial ribosomal protein bL20 family.

Binds directly to 23S ribosomal RNA and is necessary for the in vitro assembly process of the 50S ribosomal subunit. It is not involved in the protein synthesizing functions of that subunit. In Fusobacterium nucleatum subsp. nucleatum (strain ATCC 25586 / DSM 15643 / BCRC 10681 / CIP 101130 / JCM 8532 / KCTC 2640 / LMG 13131 / VPI 4355), this protein is Large ribosomal subunit protein bL20.